The sequence spans 115 residues: Large ribosomal subunit protein uL24 (115 aa).

It belongs to the universal ribosomal protein uL24 family. In terms of assembly, part of the 50S ribosomal subunit.

Its function is as follows. One of two assembly initiator proteins, it binds directly to the 5'-end of the 23S rRNA, where it nucleates assembly of the 50S subunit. Functionally, one of the proteins that surrounds the polypeptide exit tunnel on the outside of the subunit. This chain is Large ribosomal subunit protein uL24, found in Deinococcus deserti (strain DSM 17065 / CIP 109153 / LMG 22923 / VCD115).